Here is a 312-residue protein sequence, read N- to C-terminus: tRNA uridine(34) hydroxylase (312 aa).

The region spanning 147–237 (SDRNVIFIDM…GILGYVHDAN (91 aa)) is the Rhodanese domain. The active-site Cysteine persulfide intermediate is Cys-201.

The protein belongs to the TrhO family.

It carries out the reaction uridine(34) in tRNA + AH2 + O2 = 5-hydroxyuridine(34) in tRNA + A + H2O. In terms of biological role, catalyzes oxygen-dependent 5-hydroxyuridine (ho5U) modification at position 34 in tRNAs. This Buchnera aphidicola subsp. Schizaphis graminum (strain Sg) protein is tRNA uridine(34) hydroxylase.